Here is a 192-residue protein sequence, read N- to C-terminus: Orotate phosphoribosyltransferase (192 aa).

Residue 116-124 coordinates 5-phospho-alpha-D-ribose 1-diphosphate; sequence EDIVTTGLS. The orotate site is built by threonine 120 and arginine 148.

This sequence belongs to the purine/pyrimidine phosphoribosyltransferase family. PyrE subfamily. Homodimer. The cofactor is Mg(2+).

The enzyme catalyses orotidine 5'-phosphate + diphosphate = orotate + 5-phospho-alpha-D-ribose 1-diphosphate. It functions in the pathway pyrimidine metabolism; UMP biosynthesis via de novo pathway; UMP from orotate: step 1/2. Functionally, catalyzes the transfer of a ribosyl phosphate group from 5-phosphoribose 1-diphosphate to orotate, leading to the formation of orotidine monophosphate (OMP). This is Orotate phosphoribosyltransferase from Brucella canis (strain ATCC 23365 / NCTC 10854 / RM-666).